The chain runs to 284 residues: Small ribosomal subunit protein uS2 (284 aa).

Belongs to the universal ribosomal protein uS2 family.

The polypeptide is Small ribosomal subunit protein uS2 (rpsB) (Mycoplasma genitalium (strain ATCC 33530 / DSM 19775 / NCTC 10195 / G37) (Mycoplasmoides genitalium)).